Here is a 199-residue protein sequence, read N- to C-terminus: Cilia- and flagella-associated protein 20 (199 aa).

It belongs to the CFAP20 family. In terms of tissue distribution, expressed in spermatocytes and chordotonal organs in sensory neurons of the antenna.

It localises to the nucleus. The protein localises to the nucleolus. The protein resides in the cell projection. It is found in the cilium. Its subcellular location is the cytoplasm. It localises to the cytoskeleton. The protein localises to the microtubule organizing center. The protein resides in the centrosome. It is found in the centriole. Its subcellular location is the flagellum. It localises to the cilium axoneme. Its function is as follows. Cilium- and flagellum-specific protein that plays a role in axonemal structure organization and motility. Microtubule inner protein (MIP) part of the dynein-decorated doublet microtubules (DMTs) in cilia axoneme, which is required for motile cilia beating. Involved in the regulation of the size and morphology of cilia. Required for sperm individualization, differentiation of the sperm flagellum and tubulin polyglycylation of axonemal microtubules. In Drosophila melanogaster (Fruit fly), this protein is Cilia- and flagella-associated protein 20.